The primary structure comprises 213 residues: ATP phosphoribosyltransferase (213 aa).

This sequence belongs to the ATP phosphoribosyltransferase family. Short subfamily. Heteromultimer composed of HisG and HisZ subunits.

It localises to the cytoplasm. It carries out the reaction 1-(5-phospho-beta-D-ribosyl)-ATP + diphosphate = 5-phospho-alpha-D-ribose 1-diphosphate + ATP. The protein operates within amino-acid biosynthesis; L-histidine biosynthesis; L-histidine from 5-phospho-alpha-D-ribose 1-diphosphate: step 1/9. Its function is as follows. Catalyzes the condensation of ATP and 5-phosphoribose 1-diphosphate to form N'-(5'-phosphoribosyl)-ATP (PR-ATP). Has a crucial role in the pathway because the rate of histidine biosynthesis seems to be controlled primarily by regulation of HisG enzymatic activity. This Variovorax paradoxus (strain S110) protein is ATP phosphoribosyltransferase.